A 37-amino-acid polypeptide reads, in one-letter code: Cytochrome b6-f complex subunit 5 (37 aa).

Residues 5–25 (LLSGIVLGMITVSAFGLFVAA) form a helical membrane-spanning segment.

It belongs to the PetG family. In terms of assembly, the 4 large subunits of the cytochrome b6-f complex are cytochrome b6, subunit IV (17 kDa polypeptide, PetD), cytochrome f and the Rieske protein, while the 4 small subunits are PetG, PetL, PetM and PetN. The complex functions as a dimer.

It localises to the plastid. Its subcellular location is the chloroplast thylakoid membrane. Functionally, component of the cytochrome b6-f complex, which mediates electron transfer between photosystem II (PSII) and photosystem I (PSI), cyclic electron flow around PSI, and state transitions. PetG is required for either the stability or assembly of the cytochrome b6-f complex. This is Cytochrome b6-f complex subunit 5 from Thalassiosira pseudonana (Marine diatom).